Consider the following 209-residue polypeptide: Uracil phosphoribosyltransferase (209 aa).

5-phospho-alpha-D-ribose 1-diphosphate contacts are provided by residues arginine 79, arginine 104, and 131–139 (DPMLATGAS). Uracil-binding positions include isoleucine 194 and 199-201 (GDA). 5-phospho-alpha-D-ribose 1-diphosphate is bound at residue aspartate 200.

The protein belongs to the UPRTase family. Requires Mg(2+) as cofactor.

It catalyses the reaction UMP + diphosphate = 5-phospho-alpha-D-ribose 1-diphosphate + uracil. It functions in the pathway pyrimidine metabolism; UMP biosynthesis via salvage pathway; UMP from uracil: step 1/1. Its activity is regulated as follows. Allosterically activated by GTP. Functionally, catalyzes the conversion of uracil and 5-phospho-alpha-D-ribose 1-diphosphate (PRPP) to UMP and diphosphate. This Staphylococcus saprophyticus subsp. saprophyticus (strain ATCC 15305 / DSM 20229 / NCIMB 8711 / NCTC 7292 / S-41) protein is Uracil phosphoribosyltransferase.